The chain runs to 382 residues: GTPase Obg (382 aa).

An Obg domain is found at 2–161 (VKFADESKIR…REIIVELNII (160 aa)). An OBG-type G domain is found at 162 to 328 (ADIGLVGFPN…VKKAFIRLAD (167 aa)). GTP-binding positions include 168–175 (GFPNAGKS), 193–197 (FTTKI), 215–218 (DIPG), 282–285 (TKLD), and 309–311 (SLY). Ser175 and Thr195 together coordinate Mg(2+). Positions 360–382 (EEKNDDEHFGATVSLSRKRKPKK) are disordered.

Belongs to the TRAFAC class OBG-HflX-like GTPase superfamily. OBG GTPase family. In terms of assembly, monomer. It depends on Mg(2+) as a cofactor.

The protein resides in the cytoplasm. In terms of biological role, an essential GTPase which binds GTP, GDP and possibly (p)ppGpp with moderate affinity, with high nucleotide exchange rates and a fairly low GTP hydrolysis rate. Plays a role in control of the cell cycle, stress response, ribosome biogenesis and in those bacteria that undergo differentiation, in morphogenesis control. The protein is GTPase Obg of Treponema denticola (strain ATCC 35405 / DSM 14222 / CIP 103919 / JCM 8153 / KCTC 15104).